A 241-amino-acid polypeptide reads, in one-letter code: Orotidine 5'-phosphate decarboxylase (241 aa).

Substrate is bound by residues Asp19, Lys41, 69–78 (DLKFFDIPAT), Thr124, Arg185, Gln194, Gly214, and Arg215. The active-site Proton donor is the Lys71.

This sequence belongs to the OMP decarboxylase family. Type 1 subfamily. As to quaternary structure, homodimer.

The catalysed reaction is orotidine 5'-phosphate + H(+) = UMP + CO2. The protein operates within pyrimidine metabolism; UMP biosynthesis via de novo pathway; UMP from orotate: step 2/2. Its function is as follows. Catalyzes the decarboxylation of orotidine 5'-monophosphate (OMP) to uridine 5'-monophosphate (UMP). This Stenotrophomonas maltophilia (strain K279a) protein is Orotidine 5'-phosphate decarboxylase.